A 264-amino-acid polypeptide reads, in one-letter code: Thymidylate synthase (264 aa).

Arg21 is a dUMP binding site. Position 51 (His51) interacts with (6R)-5,10-methylene-5,6,7,8-tetrahydrofolate. Position 126–127 (126–127 (RR)) interacts with dUMP. Cys146 serves as the catalytic Nucleophile. Residues 166 to 169 (RSAD), Asn177, and 207 to 209 (HIY) contribute to the dUMP site. Asp169 serves as a coordination point for (6R)-5,10-methylene-5,6,7,8-tetrahydrofolate. Residue Ser263 coordinates (6R)-5,10-methylene-5,6,7,8-tetrahydrofolate.

It belongs to the thymidylate synthase family. Bacterial-type ThyA subfamily. In terms of assembly, homodimer.

It is found in the cytoplasm. It catalyses the reaction dUMP + (6R)-5,10-methylene-5,6,7,8-tetrahydrofolate = 7,8-dihydrofolate + dTMP. It functions in the pathway pyrimidine metabolism; dTTP biosynthesis. Functionally, catalyzes the reductive methylation of 2'-deoxyuridine-5'-monophosphate (dUMP) to 2'-deoxythymidine-5'-monophosphate (dTMP) while utilizing 5,10-methylenetetrahydrofolate (mTHF) as the methyl donor and reductant in the reaction, yielding dihydrofolate (DHF) as a by-product. This enzymatic reaction provides an intracellular de novo source of dTMP, an essential precursor for DNA biosynthesis. The sequence is that of Thymidylate synthase from Bacillus velezensis (strain DSM 23117 / BGSC 10A6 / LMG 26770 / FZB42) (Bacillus amyloliquefaciens subsp. plantarum).